Here is a 272-residue protein sequence, read N- to C-terminus: Formamidopyrimidine-DNA glycosylase (272 aa).

Residue Pro-2 is the Schiff-base intermediate with DNA of the active site. Glu-3 serves as the catalytic Proton donor. Residue Lys-56 is the Proton donor; for beta-elimination activity of the active site. Residues His-89, Arg-108, and Lys-149 each contribute to the DNA site. The segment at 234-268 (LAYGRAGEMCVNCETPLENLKLGQRASVFCPQCQP) adopts an FPG-type zinc-finger fold. Arg-258 acts as the Proton donor; for delta-elimination activity in catalysis.

This sequence belongs to the FPG family. Monomer. The cofactor is Zn(2+).

The catalysed reaction is Hydrolysis of DNA containing ring-opened 7-methylguanine residues, releasing 2,6-diamino-4-hydroxy-5-(N-methyl)formamidopyrimidine.. It carries out the reaction 2'-deoxyribonucleotide-(2'-deoxyribose 5'-phosphate)-2'-deoxyribonucleotide-DNA = a 3'-end 2'-deoxyribonucleotide-(2,3-dehydro-2,3-deoxyribose 5'-phosphate)-DNA + a 5'-end 5'-phospho-2'-deoxyribonucleoside-DNA + H(+). Involved in base excision repair of DNA damaged by oxidation or by mutagenic agents. Acts as a DNA glycosylase that recognizes and removes damaged bases. Has a preference for oxidized purines, such as 7,8-dihydro-8-oxoguanine (8-oxoG). Has AP (apurinic/apyrimidinic) lyase activity and introduces nicks in the DNA strand. Cleaves the DNA backbone by beta-delta elimination to generate a single-strand break at the site of the removed base with both 3'- and 5'-phosphates. The sequence is that of Formamidopyrimidine-DNA glycosylase from Acinetobacter baylyi (strain ATCC 33305 / BD413 / ADP1).